We begin with the raw amino-acid sequence, 376 residues long: Putative aryl-alcohol dehydrogenase AAD14 (376 aa).

The active-site Proton donor is Tyr-76. His-151 contributes to the substrate binding site. An NADP(+)-binding site is contributed by 236 to 246 (DVMGGGRFQSK).

Belongs to the aldo/keto reductase family. Aldo/keto reductase 2 subfamily.

In Saccharomyces cerevisiae (strain ATCC 204508 / S288c) (Baker's yeast), this protein is Putative aryl-alcohol dehydrogenase AAD14 (AAD14).